Consider the following 384-residue polypeptide: Ubiquitin-like modifier-activating enzyme 5 (384 aa).

Residues Gly-63, Asp-84, Lys-107, Asn-130, and Asn-164 each coordinate ATP. Zn(2+) contacts are provided by Cys-206 and Cys-209. Catalysis depends on Cys-230, which acts as the Glycyl thioester intermediate. Residues Cys-283 and Cys-288 each contribute to the Zn(2+) site. Positions 352–375 are disordered; that stretch reads EAPEKSSAEATQAATAPVDDTSLE.

Belongs to the ubiquitin-activating E1 family. UBA5 subfamily.

Its function is as follows. E1-like enzyme which activates UFM1. This is Ubiquitin-like modifier-activating enzyme 5 from Drosophila persimilis (Fruit fly).